We begin with the raw amino-acid sequence, 142 residues long: COA8 family protein CBG23705, mitochondrial (142 aa).

The protein belongs to the COA8 family.

It is found in the mitochondrion inner membrane. Its function is as follows. May be required for cytochrome c complex (COX) assembly and function, COX being the terminal component of the mitochondrial respiratory chain. The polypeptide is COA8 family protein CBG23705, mitochondrial (Caenorhabditis briggsae).